Consider the following 380-residue polypeptide: Glucose-1-phosphate adenylyltransferase (380 aa).

Alpha-D-glucose 1-phosphate is bound by residues G164, 179-180 (EK), and S190.

The protein belongs to the bacterial/plant glucose-1-phosphate adenylyltransferase family. Homotetramer.

It catalyses the reaction alpha-D-glucose 1-phosphate + ATP + H(+) = ADP-alpha-D-glucose + diphosphate. It participates in glycan biosynthesis; glycogen biosynthesis. Functionally, involved in the biosynthesis of ADP-glucose, a building block required for the elongation reactions to produce glycogen. Catalyzes the reaction between ATP and alpha-D-glucose 1-phosphate (G1P) to produce pyrophosphate and ADP-Glc. In Streptococcus pneumoniae (strain Hungary19A-6), this protein is Glucose-1-phosphate adenylyltransferase.